A 438-amino-acid polypeptide reads, in one-letter code: Histidine--tRNA ligase (438 aa).

It belongs to the class-II aminoacyl-tRNA synthetase family. In terms of assembly, homodimer.

It localises to the cytoplasm. The enzyme catalyses tRNA(His) + L-histidine + ATP = L-histidyl-tRNA(His) + AMP + diphosphate + H(+). This is Histidine--tRNA ligase from Aromatoleum aromaticum (strain DSM 19018 / LMG 30748 / EbN1) (Azoarcus sp. (strain EbN1)).